Consider the following 286-residue polypeptide: ATP synthase gamma chain (286 aa).

This sequence belongs to the ATPase gamma chain family. In terms of assembly, F-type ATPases have 2 components, CF(1) - the catalytic core - and CF(0) - the membrane proton channel. CF(1) has five subunits: alpha(3), beta(3), gamma(1), delta(1), epsilon(1). CF(0) has three main subunits: a, b and c.

The protein localises to the cell membrane. In terms of biological role, produces ATP from ADP in the presence of a proton gradient across the membrane. The gamma chain is believed to be important in regulating ATPase activity and the flow of protons through the CF(0) complex. The chain is ATP synthase gamma chain from Malacoplasma penetrans (strain HF-2) (Mycoplasma penetrans).